The primary structure comprises 72 residues: MAKEDVIEVEGVVQETLPNAMFNVELENGHKVLATVSGKIRMHYIRILPGDKVTVELSPYDLTRGRITYRFK.

The S1-like domain maps to 1 to 72; that stretch reads MAKEDVIEVE…TRGRITYRFK (72 aa).

This sequence belongs to the IF-1 family. Component of the 30S ribosomal translation pre-initiation complex which assembles on the 30S ribosome in the order IF-2 and IF-3, IF-1 and N-formylmethionyl-tRNA(fMet); mRNA recruitment can occur at any time during PIC assembly.

The protein localises to the cytoplasm. One of the essential components for the initiation of protein synthesis. Stabilizes the binding of IF-2 and IF-3 on the 30S subunit to which N-formylmethionyl-tRNA(fMet) subsequently binds. Helps modulate mRNA selection, yielding the 30S pre-initiation complex (PIC). Upon addition of the 50S ribosomal subunit IF-1, IF-2 and IF-3 are released leaving the mature 70S translation initiation complex. The protein is Translation initiation factor IF-1 of Listeria innocua serovar 6a (strain ATCC BAA-680 / CLIP 11262).